We begin with the raw amino-acid sequence, 805 residues long: Phenylalanine--tRNA ligase beta subunit (805 aa).

Residues 39–148 (APPFTGVVVA…AALRPGTDIR (110 aa)) form the tRNA-binding domain. Positions 399-474 (PVREPVRMRL…RVYGFERIPD (76 aa)) constitute a B5 domain. Mg(2+) contacts are provided by Asp452, Asp458, Glu461, and Glu462. The FDX-ACB domain occupies 703 to 804 (SRQPAVVRDL…LVAAHNARQR (102 aa)).

Belongs to the phenylalanyl-tRNA synthetase beta subunit family. Type 1 subfamily. As to quaternary structure, tetramer of two alpha and two beta subunits. Requires Mg(2+) as cofactor.

It is found in the cytoplasm. The catalysed reaction is tRNA(Phe) + L-phenylalanine + ATP = L-phenylalanyl-tRNA(Phe) + AMP + diphosphate + H(+). In Bordetella parapertussis (strain 12822 / ATCC BAA-587 / NCTC 13253), this protein is Phenylalanine--tRNA ligase beta subunit.